Reading from the N-terminus, the 234-residue chain is Phosphoglycolate phosphatase (234 aa).

The active-site Nucleophile is the aspartate 8. Mg(2+) is bound by residues aspartate 8 and aspartate 10. Position 157 (lysine 157) interacts with substrate. Residues aspartate 180 and aspartate 184 each coordinate Mg(2+).

It belongs to the archaeal SPP-like hydrolase family. It depends on Mg(2+) as a cofactor.

It carries out the reaction 2-phosphoglycolate + H2O = glycolate + phosphate. In terms of biological role, catalyzes the dephosphorylation of 2-phosphoglycolate. In Methanoculleus marisnigri (strain ATCC 35101 / DSM 1498 / JR1), this protein is Phosphoglycolate phosphatase.